The primary structure comprises 466 residues: Cysteine--tRNA ligase (466 aa).

A Zn(2+)-binding site is contributed by Cys-33. The short motif at 35–45 is the 'HIGH' region element; it reads PTVYDYAHIGN. 3 residues coordinate Zn(2+): Cys-221, His-246, and Glu-250. The 'KMSKS' region signature appears at 279-283; the sequence is KMSKS. Position 282 (Lys-282) interacts with ATP.

Belongs to the class-I aminoacyl-tRNA synthetase family. Monomer. Zn(2+) is required as a cofactor.

It is found in the cytoplasm. It carries out the reaction tRNA(Cys) + L-cysteine + ATP = L-cysteinyl-tRNA(Cys) + AMP + diphosphate. The chain is Cysteine--tRNA ligase from Rhizobium meliloti (strain 1021) (Ensifer meliloti).